The chain runs to 457 residues: UDP-N-acetylmuramate--L-alanine ligase (457 aa).

ATP is bound at residue 109 to 115 (GTDGKTT).

This sequence belongs to the MurCDEF family.

Its subcellular location is the cytoplasm. It catalyses the reaction UDP-N-acetyl-alpha-D-muramate + L-alanine + ATP = UDP-N-acetyl-alpha-D-muramoyl-L-alanine + ADP + phosphate + H(+). It participates in cell wall biogenesis; peptidoglycan biosynthesis. Cell wall formation. The sequence is that of UDP-N-acetylmuramate--L-alanine ligase (murC) from Thermotoga maritima (strain ATCC 43589 / DSM 3109 / JCM 10099 / NBRC 100826 / MSB8).